The chain runs to 58 residues: Large ribosomal subunit protein uL30 (58 aa).

This sequence belongs to the universal ribosomal protein uL30 family. As to quaternary structure, part of the 50S ribosomal subunit.

The polypeptide is Large ribosomal subunit protein uL30 (Zymomonas mobilis subsp. mobilis (strain ATCC 31821 / ZM4 / CP4)).